The following is a 196-amino-acid chain: Interleukin-23 subunit alpha (196 aa).

Residues 1-21 (MLDCRAVIMLWLLPWVTQGLA) form the signal peptide.

Belongs to the IL-6 superfamily. As to quaternary structure, heterodimer with IL12B; disulfide-linked. The heterodimer is known as interleukin IL-23. Interacts with IL23R; this interaction enables recruitment of IL12RB1. In terms of tissue distribution, secreted by activated dendritic cells (at protein level). Detected in various tissues with higher expression in polarized Th1 cells and activated macrophages.

It localises to the secreted. Functionally, associates with IL12B to form the IL-23 interleukin, a heterodimeric cytokine which functions in innate and adaptive immunity. IL-23 may constitute with IL-17 an acute response to infection in peripheral tissues. IL-23 binds to a heterodimeric receptor complex composed of IL12RB1 and IL23R, activates the Jak-Stat signaling cascade, stimulates memory rather than naive T-cells and promotes production of pro-inflammatory cytokines. IL-23 induces autoimmune inflammation and thus may be responsible for autoimmune inflammatory diseases and may be important for tumorigenesis. Associates with IL12B to form the pro-inflammatory cytokine IL-23 that plays different roles in innate and adaptive immunity. Released by antigen-presenting cells such as dendritic cells or macrophages, binds to a heterodimeric receptor complex composed of IL12RB1 and IL23R to activate JAK2 and TYK2 which then phosphorylate the receptor to form a docking site leading to the phosphorylation of STAT3 and STAT4. This process leads to activation of several pathways including p38 MAPK or NF-kappa-B and promotes the production of pro-inflammatory cytokines such as interleukin-17A/IL17A. In turn, participates in the early and effective intracellular bacterial clearance. Promotes the expansion and survival of T-helper 17 cells, a CD4-positive helper T-cell subset that produces IL-17, as well as other IL-17-producing cells. In Mus musculus (Mouse), this protein is Interleukin-23 subunit alpha (Il23a).